A 399-amino-acid polypeptide reads, in one-letter code: Brefeldin A resistance protein (399 aa).

Basic and acidic residues-rich tracts occupy residues 1–31, 49–69, and 101–130; these read MTSK…DETS, SKSE…KETT, and KVEE…KESA. 2 disordered regions span residues 1–173 and 191–269; these read MTSK…FGAF and KKFA…SEII. Low complexity predominate over residues 138–157; sequence SPFSQFASFSNASSPFSNVS. 2 stretches are compositionally biased toward basic and acidic residues: residues 205 to 217 and 241 to 252; these read SGKE…KSSE and TKSEPKEADKGS. Positions 253-263 are enriched in polar residues; the sequence is GDSTKSTMHQL. A RanBD1 domain is found at 256-396; it reads TKSTMHQLSD…VLEAIPKGGR (141 aa).

Post-translationally, phosphorylated.

It localises to the nucleus. This is Brefeldin A resistance protein (hba1) from Schizosaccharomyces pombe (strain 972 / ATCC 24843) (Fission yeast).